The chain runs to 418 residues: Light-independent protochlorophyllide reductase subunit N (418 aa).

Positions 17, 42, and 103 each coordinate [4Fe-4S] cluster.

The protein belongs to the BchN/ChlN family. As to quaternary structure, protochlorophyllide reductase is composed of three subunits; ChlL, ChlN and ChlB. Forms a heterotetramer of two ChlB and two ChlN subunits. [4Fe-4S] cluster is required as a cofactor.

The catalysed reaction is chlorophyllide a + oxidized 2[4Fe-4S]-[ferredoxin] + 2 ADP + 2 phosphate = protochlorophyllide a + reduced 2[4Fe-4S]-[ferredoxin] + 2 ATP + 2 H2O. It functions in the pathway porphyrin-containing compound metabolism; chlorophyll biosynthesis (light-independent). In terms of biological role, component of the dark-operative protochlorophyllide reductase (DPOR) that uses Mg-ATP and reduced ferredoxin to reduce ring D of protochlorophyllide (Pchlide) to form chlorophyllide a (Chlide). This reaction is light-independent. The NB-protein (ChlN-ChlB) is the catalytic component of the complex. The protein is Light-independent protochlorophyllide reductase subunit N of Prochlorococcus marinus (strain SARG / CCMP1375 / SS120).